The sequence spans 185 residues: MLLKLILILCFLVTLSLSVKVDSADPALFTQGPTIASGGTGNTGANPCYGHDDEDGSKDPAMFTQGPVSSGSGSGSGGYCPHHKNRAQEGGKKDTTKEQPKENNNNKNLGRHSSSGSGSGSGSGCGVTGDTGTGSGRTTAPVNDGVTYKSSNVKETEQYRGGAGRGKHNQATEENVQDCGEITGW.

A signal peptide spans 1–18 (MLLKLILILCFLVTLSLS). The interval 30–185 (TQGPTIASGG…VQDCGEITGW (156 aa)) is disordered. Over residues 86–101 (RAQEGGKKDTTKEQPK) the composition is skewed to basic and acidic residues. Residues 103–116 (NNNNKNLGRHSSSG) are compositionally biased toward low complexity. Residues 117-135 (SGSGSGSGCGVTGDTGTGS) show a composition bias toward gly residues.

The protein resides in the secreted. This is an uncharacterized protein from Dictyostelium discoideum (Social amoeba).